Here is a 582-residue protein sequence, read N- to C-terminus: DNA polymerase IV (582 aa).

Positions Asn-127–Ala-161 are disordered. Residues Thr-135–Asn-155 are compositionally biased toward basic and acidic residues. The involved in ssDNA binding stretch occupies residues Arg-360–Asp-369. Residues Asp-367, Asp-369, and Asp-502 each contribute to the Mg(2+) site.

Belongs to the DNA polymerase type-X family. As to quaternary structure, interacts with DNL4 subunit of the DNL4-LIF1 complex. It depends on Mg(2+) as a cofactor.

The protein localises to the nucleus. It carries out the reaction DNA(n) + a 2'-deoxyribonucleoside 5'-triphosphate = DNA(n+1) + diphosphate. Stimulated by the interaction with the DNL4-LIF1 complex. In terms of biological role, repair polymerase. Involved in gap-filling in DNA nonhomologous end joining (NHEJ) required for double-strand break repair. Seems to conduct DNA synthesis in a stepwise distributive fashion rather than in a processive fashion as for other DNA polymerases. Preferentially acts upon short gaps formed by the alignment of linear duplexes with complementary single-strand ends. Required for filling gaps that need removal of a 5'- or 3'-terminal mismatch, however lacks nuclease activities. In Saccharomyces cerevisiae (strain ATCC 204508 / S288c) (Baker's yeast), this protein is DNA polymerase IV (POL4).